The chain runs to 362 residues: Vignain (362 aa).

The first 20 residues, 1-20, serve as a signal peptide directing secretion; sequence MATKKLLWVVLSFSLVLGVA. Residues 21-131 constitute a propeptide, activation peptide; the sequence is NSFDFHDKDL…YEKVVSVPPS (111 aa). 3 disulfide bridges follow: Cys149–Cys191, Cys183–Cys224, and Cys282–Cys334. The active site involves Cys152. Catalysis depends on residues His288 and Asn309. N-linked (GlcNAc...) asparagine glycosylation is found at Asn326 and Asn346. The short motif at 359–362 is the Prevents secretion from ER element; sequence KDEL.

Belongs to the peptidase C1 family. As to quaternary structure, monomer.

The protein localises to the endoplasmic reticulum lumen. Thought to be involved in the hydrolysis of stored seed proteins. The protein is Vignain of Phaseolus vulgaris (Kidney bean).